We begin with the raw amino-acid sequence, 406 residues long: MKKDIKKVVLAYSGGLDTSIILKWLQDEYKSEVVTFTADIGQGEELEPARKKALSLGVKEENIFIKDLKDEFVKDYVFAMFRANAIYEGEYLLGTSIARPLIAKALVEIANKTNADAISHGATGKGNDQVRFELGALALNPNLAIIAPWREWDLNSREKLLAYAQKHGIDIVKKADKSPYSMDANLLHISYEGLVLEDPAAKPEADMWRWVRDLKQTPNESEVIELEFSKGDLCAINGEKMSPAQLLAKLNELGAKHGIGRLDIVENRYVGMKSRGCYETPGGSILLKAHRAIESITLDREAAHLKDELMPKYASLIYNGYWFSPERLMLQALIDESQKHVNGKVKLELYKGNVMVIGRESANDSLFSEAYCTFEEDSVYDQKDAAGFIKLNALRFIIAGKNGRKF.

ATP-binding positions include 11–19 and Ala38; that span reads AYSGGLDTS. Positions 91 and 96 each coordinate L-citrulline. Gly121 lines the ATP pocket. The L-aspartate site is built by Thr123, Asn127, and Asp128. Residue Asn127 participates in L-citrulline binding. Residues Arg131, Ser181, Ser190, Glu266, and Tyr278 each contribute to the L-citrulline site.

Belongs to the argininosuccinate synthase family. Type 1 subfamily. Homotetramer.

It is found in the cytoplasm. The catalysed reaction is L-citrulline + L-aspartate + ATP = 2-(N(omega)-L-arginino)succinate + AMP + diphosphate + H(+). The protein operates within amino-acid biosynthesis; L-arginine biosynthesis; L-arginine from L-ornithine and carbamoyl phosphate: step 2/3. The chain is Argininosuccinate synthase from Campylobacter lari (strain RM2100 / D67 / ATCC BAA-1060).